Consider the following 1241-residue polypeptide: ATP-dependent helicase/nuclease subunit A (1241 aa).

A UvrD-like helicase ATP-binding domain is found at 12–485; it reads SQWTDDQWKA…IDLAKNFRSR (474 aa). 33 to 40 lines the ATP pocket; sequence AAAGSGKT. A UvrD-like helicase C-terminal domain is found at 505 to 805; it reads GEIDYDADAE…RIMTIHKSKG (301 aa).

Belongs to the helicase family. AddA subfamily. Heterodimer of AddA and AddB/RexB. Requires Mg(2+) as cofactor.

It carries out the reaction Couples ATP hydrolysis with the unwinding of duplex DNA by translocating in the 3'-5' direction.. The catalysed reaction is ATP + H2O = ADP + phosphate + H(+). In terms of biological role, the heterodimer acts as both an ATP-dependent DNA helicase and an ATP-dependent, dual-direction single-stranded exonuclease. Recognizes the chi site generating a DNA molecule suitable for the initiation of homologous recombination. The AddA nuclease domain is required for chi fragment generation; this subunit has the helicase and 3' -&gt; 5' nuclease activities. The sequence is that of ATP-dependent helicase/nuclease subunit A from Bacillus anthracis.